A 184-amino-acid polypeptide reads, in one-letter code: MLRTEKEKMAAGELYNSEDQQLLLERKHARQLIRQYNETPEDDAVRTKLLKELLGSVGDQVTILPTFRCDYGYHIHIGDHTFVNFDCVILDVCEVRIGCHCLIAPGVHIYTAGHPLDPIERKSGKEFGKPVTIGDQVWIGGRAVINPGVTIGDNAVIASGSVVTKDVPANTVVGGNPARILKQL.

Asn84 serves as a coordination point for acetyl-CoA. His114 functions as the Proton donor/acceptor in the catalytic mechanism. Residues Gly141, Ser159, 164-165 (TK), Arg179, and Lys182 contribute to the acetyl-CoA site.

The protein belongs to the transferase hexapeptide repeat family. Homodimer.

The enzyme catalyses D-maltose + acetyl-CoA = 1-O-acetylmaltose + CoA. Catalyzes the CoA-dependent transfer of an acetyl group to maltose and other sugars. Acetylates glucose exclusively at the C6 position and maltose at the C6 position of the non-reducing end glucosyl moiety. Is able to acetylate maltooligosaccharides. In Bacillus subtilis (strain 168), this protein is Probable maltose O-acetyltransferase (maa).